A 1066-amino-acid chain; its full sequence is Coiled-coil domain-containing protein 73 (1066 aa).

Coiled-coil stretches lie at residues 47 to 134 and 178 to 391; these read KAET…QVSQ and LVRE…KTEE. Disordered regions lie at residues 568–600, 719–811, 854–883, 944–978, and 1003–1027; these read LDTR…SNPF, SENS…PKSG, LSPA…PEKT, KNIE…EERN, and VQQS…PGNN. Composition is skewed to polar residues over residues 591–600, 742–781, 789–811, 857–869, and 948–964; these read NTDGSESNPF, RTNT…TSQA, PLTT…PKSG, ATPS…TSAR, and SDPT…SNWS. Over residues 967 to 978 the composition is skewed to basic and acidic residues; it reads LDPKGQPREERN. The span at 1003–1013 shows a compositional bias: polar residues; the sequence is VQQSHSQTVKV.

This chain is Coiled-coil domain-containing protein 73 (Ccdc73), found in Mus musculus (Mouse).